A 99-amino-acid polypeptide reads, in one-letter code: DNA-binding protein HmvA (99 aa).

Positions 52–55 (KTIK) are interaction with DNA.

The protein belongs to the archaeal histone HMF family. In terms of assembly, homodimer or heterodimer with another histone. Dimers then assemble into higher oligomers, with the DNA wrapped around the protein core.

Its subcellular location is the cytoplasm. The protein localises to the chromosome. Its function is as follows. Binds and compact DNA (95 to 150 base pairs) to form nucleosome-like structures that contain positive DNA supercoils. Increases the resistance of DNA to thermal denaturation (in vitro). The polypeptide is DNA-binding protein HmvA (hmvA) (Methanococcus voltae).